The primary structure comprises 443 residues: Thymidine phosphorylase (443 aa).

This sequence belongs to the thymidine/pyrimidine-nucleoside phosphorylase family. As to quaternary structure, homodimer.

The enzyme catalyses thymidine + phosphate = 2-deoxy-alpha-D-ribose 1-phosphate + thymine. It participates in pyrimidine metabolism; dTMP biosynthesis via salvage pathway; dTMP from thymine: step 1/2. Its function is as follows. The enzymes which catalyze the reversible phosphorolysis of pyrimidine nucleosides are involved in the degradation of these compounds and in their utilization as carbon and energy sources, or in the rescue of pyrimidine bases for nucleotide synthesis. The chain is Thymidine phosphorylase from Aliivibrio salmonicida (strain LFI1238) (Vibrio salmonicida (strain LFI1238)).